The sequence spans 728 residues: MWVTKLLPALLLQHVLLHLLLLPIAIPYAEGQRKRRNTIHEFKKSAKTTLIKIDPALKIKTKKVNTADQCANRCTRNKGLPFTCKAFVFDKARKQCLWFPFNSMSSGVKKEFGHEFDLYENKDYIRNCIIGKGRSYKGTVSITKSGIKCQPWSSMIPHEHSFLPSSYRGKDLQENYCRNPRGEEGGPWCFTSNPEVRYEVCDIPQCSEVECMTCNGESYRGLMDHTESGKICQRWDHQTPHRHKFLPERYPDKGFDDNYCRNPDGQPRPWCYTLDPHTRWEYCAIKTCADNTMNDTDVPLETTECIQGQGEGYRGTVNTIWNGIPCQRWDSQYPHEHDMTPENFKCKDLRENYCRNPDGSESPWCFTTDPNIRVGYCSQIPNCDMSHGQDCYRGNGKNYMGNLSQTRSGLTCSMWDKNMEDLHRHIFWEPDASKLNENYCRNPDDDAHGPWCYTGNPLIPWDYCPISRCEGDTTPTIVNLDHPVISCAKTKQLRVVNGIPTRTNIGWMVSLRYRNKHICGGSLIKESWVLTARQCFPSRDLKDYEAWLGIHDVHGRGDEKCKQVLNVSQLVYGPEGSDLVLMKLARPAVLDDFVSTIDLPNYGCTIPEKTSCSVYGWGYTGLINYDGLLRVAHLYIMGNEKCSQHHRGKVTLNESEICAGAEKIGSGPCEGDYGGPLVCEQHKMRMVLGVIVPGRGCAIPNRPGIFVRVAYYAKWIHKIILTYKVPQS.

A signal peptide spans 1-31 (MWVTKLLPALLLQHVLLHLLLLPIAIPYAEG). Gln-32 carries the post-translational modification Pyrrolidone carboxylic acid. In terms of domain architecture, PAN spans 37–123 (NTIHEFKKSA…HEFDLYENKD (87 aa)). Disulfide bonds link Cys-70–Cys-96, Cys-74–Cys-84, Cys-128–Cys-206, Cys-149–Cys-189, Cys-177–Cys-201, Cys-211–Cys-288, Cys-232–Cys-271, and Cys-260–Cys-283. Kringle domains lie at 128-206 (CIIG…IPQC) and 211-288 (CMTC…IKTC). An N-linked (GlcNAc...) (complex) asparagine glycan is attached at Asn-294. Cystine bridges form between Cys-305–Cys-383, Cys-326–Cys-365, Cys-354–Cys-377, Cys-391–Cys-469, Cys-412–Cys-452, and Cys-440–Cys-464. Kringle domains follow at residues 305–383 (CIQG…IPNC) and 391–469 (CYRG…ISRC). Asn-402 carries N-linked (GlcNAc...) (complex) asparagine glycosylation. O-linked (GalNAc...) threonine glycosylation occurs at Thr-476. Intrachain disulfides connect Cys-487/Cys-604, Cys-519/Cys-535, Cys-612/Cys-679, Cys-642/Cys-658, and Cys-669/Cys-697. The Peptidase S1 domain maps to 495-721 (VVNGIPTRTN…YAKWIHKIIL (227 aa)). Residues Asn-566 and Asn-653 are each glycosylated (N-linked (GlcNAc...) (complex) asparagine).

The protein belongs to the peptidase S1 family. Plasminogen subfamily. As to quaternary structure, dimer of an alpha chain and a beta chain linked by a disulfide bond. Interacts with SRPX2; the interaction increases HGF mitogenic activity. In terms of processing, the single-chain precursor undergoes proteolytic processing by TMPRSS13 resulting in an active two-chain form. The single-chain precursor undergoes proteolytic processing by HGFAC resulting in an active two-chain form.

Functionally, potent mitogen for mature parenchymal hepatocyte cells, seems to be a hepatotrophic factor, and acts as a growth factor for a broad spectrum of tissues and cell types. Activating ligand for the receptor tyrosine kinase MET by binding to it and promoting its dimerization. Activates MAPK signaling following TMPRSS13 cleavage and activation. The chain is Hepatocyte growth factor (HGF) from Homo sapiens (Human).